The sequence spans 450 residues: E3 ubiquitin-protein ligase XB3 (450 aa).

ANK repeat units follow at residues 11–40 (GDEHDFFRAAQLGDLDALAALLAADPSLAR), 46–75 (DRLSVLHIAAANGRIEVLSMFLDRGAPPDA), 79–108 (HKQTPLMLAAMHGKIDCVLKLLQADANILM), 113–142 (HARTCLHHAAYYGHVDCLQAILAAAQTTPV), 158–187 (HGATPLHLAARQGRPGCVQVLLENGAIVSA), and 195–225 (PGSTSLHLAARSGNLDCIRKLLAWGADRLQR). Residues 291 to 312 (ILNGTKYSLPSPSPGDDSADDD) form a disordered region. The RING-type zinc-finger motif lies at 323 to 372 (CCICFDQACTIEVQDCGHQMCAPCTLALCCHNKPNPTTLTPPSPACPFCR). The interval 385–450 (SACDPDKPSS…SNLDKPEHDL (66 aa)) is disordered.

As to quaternary structure, interacts (via ankyrin repeats) with XA21. Post-translationally, phosphorylated by XA21.

It catalyses the reaction S-ubiquitinyl-[E2 ubiquitin-conjugating enzyme]-L-cysteine + [acceptor protein]-L-lysine = [E2 ubiquitin-conjugating enzyme]-L-cysteine + N(6)-ubiquitinyl-[acceptor protein]-L-lysine.. Its pathway is protein modification; protein ubiquitination. Functionally, E3 ubiquitin-protein ligase required for full accumulation of the LRR receptor kinase XA21 and XA21-mediated disease resistance. Binding to XA21 may stabilize the receptor kinase and maintain its protein level. Autoubiquitinated in vitro. In Oryza sativa subsp. japonica (Rice), this protein is E3 ubiquitin-protein ligase XB3 (XB3).